The chain runs to 232 residues: Putative quercetin 2,3-dioxygenase PA1210 (232 aa).

Residues His-57, His-59, His-101, and Glu-103 each contribute to the a divalent metal cation site.

The protein belongs to the pirin family. It depends on a divalent metal cation as a cofactor.

The enzyme catalyses quercetin + O2 = 2-(3,4-dihydroxybenzoyloxy)-4,6-dihydroxybenzoate + CO. It participates in flavonoid metabolism; quercetin degradation. Functionally, putative quercetin 2,3-dioxygenase. The polypeptide is Putative quercetin 2,3-dioxygenase PA1210 (Pseudomonas aeruginosa (strain ATCC 15692 / DSM 22644 / CIP 104116 / JCM 14847 / LMG 12228 / 1C / PRS 101 / PAO1)).